The sequence spans 673 residues: UvrABC system protein B (673 aa).

The Helicase ATP-binding domain maps to 30–417 (NSILLGNKYQ…SSVVVDQIIR (388 aa)). Position 43–50 (43–50 (GVTGSGKT)) interacts with ATP. The Beta-hairpin signature appears at 96–119 (YYDYYQPESYVPSKDLFIEKEATI). One can recognise a Helicase C-terminal domain in the interval 434–600 (QMEDLYSEIQ…TIVKKIQNIL (167 aa)). The UVR domain occupies 627-662 (KKLIDKLKFDLEEAVNDERFEDAIVLRDKIKELSSK).

This sequence belongs to the UvrB family. In terms of assembly, forms a heterotetramer with UvrA during the search for lesions. Interacts with UvrC in an incision complex.

The protein resides in the cytoplasm. The UvrABC repair system catalyzes the recognition and processing of DNA lesions. A damage recognition complex composed of 2 UvrA and 2 UvrB subunits scans DNA for abnormalities. Upon binding of the UvrA(2)B(2) complex to a putative damaged site, the DNA wraps around one UvrB monomer. DNA wrap is dependent on ATP binding by UvrB and probably causes local melting of the DNA helix, facilitating insertion of UvrB beta-hairpin between the DNA strands. Then UvrB probes one DNA strand for the presence of a lesion. If a lesion is found the UvrA subunits dissociate and the UvrB-DNA preincision complex is formed. This complex is subsequently bound by UvrC and the second UvrB is released. If no lesion is found, the DNA wraps around the other UvrB subunit that will check the other stand for damage. This chain is UvrABC system protein B, found in Borreliella burgdorferi (strain ATCC 35210 / DSM 4680 / CIP 102532 / B31) (Borrelia burgdorferi).